A 202-amino-acid polypeptide reads, in one-letter code: dTTP/UTP pyrophosphatase (202 aa).

Catalysis depends on D83, which acts as the Proton acceptor.

It belongs to the Maf family. YhdE subfamily. A divalent metal cation serves as cofactor.

It localises to the cytoplasm. The catalysed reaction is dTTP + H2O = dTMP + diphosphate + H(+). It carries out the reaction UTP + H2O = UMP + diphosphate + H(+). Its function is as follows. Nucleoside triphosphate pyrophosphatase that hydrolyzes dTTP and UTP. May have a dual role in cell division arrest and in preventing the incorporation of modified nucleotides into cellular nucleic acids. This chain is dTTP/UTP pyrophosphatase, found in Polaromonas sp. (strain JS666 / ATCC BAA-500).